A 118-amino-acid polypeptide reads, in one-letter code: Ribosome-binding factor A (118 aa).

The protein belongs to the RbfA family. As to quaternary structure, monomer. Binds 30S ribosomal subunits, but not 50S ribosomal subunits or 70S ribosomes.

The protein localises to the cytoplasm. Functionally, one of several proteins that assist in the late maturation steps of the functional core of the 30S ribosomal subunit. Associates with free 30S ribosomal subunits (but not with 30S subunits that are part of 70S ribosomes or polysomes). Required for efficient processing of 16S rRNA. May interact with the 5'-terminal helix region of 16S rRNA. The polypeptide is Ribosome-binding factor A (Latilactobacillus sakei subsp. sakei (strain 23K) (Lactobacillus sakei subsp. sakei)).